Reading from the N-terminus, the 197-residue chain is Phospholipid hydroperoxide glutathione peroxidase (197 aa).

Phosphoserine is present on S40. U73 is an active-site residue. U73 is a non-standard amino acid (selenocysteine).

It belongs to the glutathione peroxidase family. Monomer. Has a tendency to form higher mass oligomers. Interacts with FUNDC1; this interaction promotes GPX4 recruitment into mitochondria through TOM/TIM complex where it is degraded by mitophagy.

It is found in the mitochondrion. The protein resides in the cytoplasm. The catalysed reaction is a hydroperoxy polyunsaturated fatty acid + 2 glutathione = a hydroxy polyunsaturated fatty acid + glutathione disulfide + H2O. It catalyses the reaction 2 glutathione + H2O2 = glutathione disulfide + 2 H2O. It carries out the reaction tert-butyl hydroperoxide + 2 glutathione = tert-butanol + glutathione disulfide + H2O. The enzyme catalyses cumene hydroperoxide + 2 glutathione = 2-phenylpropan-2-ol + glutathione disulfide + H2O. The catalysed reaction is (9S)-hydroperoxy-(10E,12Z)-octadecadienoate + 2 glutathione = (9S)-hydroxy-(10E,12Z)-octadecadienoate + glutathione disulfide + H2O. It catalyses the reaction (13S)-hydroperoxy-(9Z,11E)-octadecadienoate + 2 glutathione = (13S)-hydroxy-(9Z,11E)-octadecadienoate + glutathione disulfide + H2O. It carries out the reaction (5S)-hydroperoxy-(6E,8Z,11Z,14Z)-eicosatetraenoate + 2 glutathione = (5S)-hydroxy-(6E,8Z,11Z,14Z)-eicosatetraenoate + glutathione disulfide + H2O. The enzyme catalyses (12R)-hydroperoxy-(5Z,8Z,10E,14Z)-eicosatetraenoate + 2 glutathione = (12R)-hydroxy-(5Z,8Z,10E,14Z)-eicosatetraenoate + glutathione disulfide + H2O. The catalysed reaction is (12S)-hydroperoxy-(5Z,8Z,10E,14Z)-eicosatetraenoate + 2 glutathione = (12S)-hydroxy-(5Z,8Z,10E,14Z)-eicosatetraenoate + glutathione disulfide + H2O. It catalyses the reaction (15S)-hydroperoxy-(5Z,8Z,11Z,13E)-eicosatetraenoate + 2 glutathione = (15S)-hydroxy-(5Z,8Z,11Z,13E)-eicosatetraenoate + glutathione disulfide + H2O. It carries out the reaction (5S)-hydroperoxy-(6E,8Z,11Z,14Z,17Z)-eicosapentaenoate + 2 glutathione = (5S)-hydroxy-(6E,8Z,11Z,14Z,17Z)-eicosapentaenoate + glutathione disulfide + H2O. The enzyme catalyses (12S)-hydroperoxy-(5Z,8Z,10E,14Z,17Z)-eicosapentaenoate + 2 glutathione = (12S)-hydroxy-(5Z,8Z,10E,14Z,17Z)-eicosapentaenoate + glutathione disulfide + H2O. The catalysed reaction is (15S)-hydroperoxy-(5Z,8Z,11Z,13E,17Z)-eicosapentaenoate + 2 glutathione = (15S)-hydroxy-(5Z,8Z,11Z,13E,17Z)-eicosapentaenoate + glutathione disulfide + H2O. It catalyses the reaction (15S)-hydroperoxy-(11Z,13E)-eicosadienoate + 2 glutathione = (15S)-hydroxy-(11Z,13E)-eicosadienoate + glutathione disulfide + H2O. It carries out the reaction (17S)-hydroperoxy-(4Z,7Z,10Z,13Z,15E,19Z)-docosahexaenoate + 2 glutathione = (17S)-hydroxy-(4Z,7Z,10Z,13Z,15E,19Z)-docosahexaenoate + glutathione disulfide + H2O. The enzyme catalyses a hydroperoxy-1,2-diacyl-glycero-3-phosphocholine + 2 glutathione = a hydroxy-1,2-diacyl-glycero-3-phosphocholine + glutathione disulfide + H2O. In terms of biological role, essential antioxidant peroxidase that directly reduces phospholipid hydroperoxide even if they are incorporated in membranes and lipoproteins. Can also reduce fatty acid hydroperoxide, cholesterol hydroperoxide and thymine hydroperoxide. Plays a key role in protecting cells from oxidative damage by preventing membrane lipid peroxidation. Required to prevent cells from ferroptosis, a non-apoptotic cell death resulting from an iron-dependent accumulation of lipid reactive oxygen species. The presence of selenocysteine (Sec) versus Cys at the active site is essential for life: it provides resistance to overoxidation and prevents cells against ferroptosis. The presence of Sec at the active site is also essential for the survival of a specific type of parvalbumin-positive interneurons, thereby preventing against fatal epileptic seizures. May be required to protect cells from the toxicity of ingested lipid hydroperoxides. Required for normal sperm development and male fertility. Essential for maturation and survival of photoreceptor cells. Plays a role in a primary T-cell response to viral and parasitic infection by protecting T-cells from ferroptosis and by supporting T-cell expansion. Plays a role of glutathione peroxidase in platelets in the arachidonic acid metabolism. Reduces hydroperoxy ester lipids formed by a 15-lipoxygenase that may play a role as down-regulator of the cellular 15-lipoxygenase pathway. Can also reduce small soluble hydroperoxides such as H2O2, cumene hydroperoxide and tert-butyl hydroperoxide. This Sus scrofa (Pig) protein is Phospholipid hydroperoxide glutathione peroxidase.